A 364-amino-acid chain; its full sequence is Methylthioribose-1-phosphate isomerase (364 aa).

Residues 46 to 48 (RGA), Arg89, and Gln196 contribute to the substrate site. The active-site Proton donor is the Asp237. Substrate is bound at residue 247–248 (NK).

This sequence belongs to the eIF-2B alpha/beta/delta subunits family. MtnA subfamily.

It carries out the reaction 5-(methylsulfanyl)-alpha-D-ribose 1-phosphate = 5-(methylsulfanyl)-D-ribulose 1-phosphate. The protein operates within amino-acid biosynthesis; L-methionine biosynthesis via salvage pathway; L-methionine from S-methyl-5-thio-alpha-D-ribose 1-phosphate: step 1/6. Catalyzes the interconversion of methylthioribose-1-phosphate (MTR-1-P) into methylthioribulose-1-phosphate (MTRu-1-P). The protein is Methylthioribose-1-phosphate isomerase of Pelotomaculum thermopropionicum (strain DSM 13744 / JCM 10971 / SI).